The primary structure comprises 1485 residues: DNA topoisomerase 2 (1485 aa).

Residues 1 to 16 (MSIDADFSDYEDEASG) are compositionally biased toward acidic residues. The interval 1-76 (MSIDADFSDY…NGNGNSNVST (76 aa)) is disordered. The span at 46–59 (DLRQTSLTSMTASE) shows a compositional bias: polar residues. Positions 64–76 (VTNNGNGNSNVST) are enriched in low complexity. Residues N136, N165, 193 to 195 (SSN), and 206 to 213 (GRNGYGAK) each bind ATP. The segment at 388 to 392 (KKENK) is interaction with DNA. 421 to 423 (QTK) provides a ligand contact to ATP. The Toprim domain occupies 499-613 (CVLILTEGDS…SLLQIPGFLI (115 aa)). Mg(2+)-binding residues include E505, D582, and D584. Residues 745–1195 (IPSVVDGLKP…TPKELWLHDL (451 aa)) enclose the Topo IIA-type catalytic domain. Y835 (O-(5'-phospho-DNA)-tyrosine intermediate) is an active-site residue. Positions 1019-1028 (KLSRTQATSN) are interaction with DNA. The span at 1216-1225 (EEQSSRDFVN) shows a compositional bias: basic and acidic residues. Residues 1216-1485 (EEQSSRDFVN…EDVDDYDESD (270 aa)) are disordered. A compositionally biased stretch (basic residues) spans 1226-1242 (RTKKKPRGKSTGTRKPR). Residues 1260 to 1273 (ESKPSTTNRKQQTL) show a composition bias toward polar residues. The segment covering 1278 to 1307 (ASKEPEKSSDINIVKTEDNSHGLSVEENRI) has biased composition (basic and acidic residues). S1310 and S1345 each carry phosphoserine. Positions 1387–1396 (AKNKGKKASS) are enriched in basic residues. The span at 1413-1425 (GSSSTPKASSTNA) shows a compositional bias: polar residues. Position 1433 is a phosphoserine (S1433). The span at 1473–1485 (DNDEDVDDYDESD) shows a compositional bias: acidic residues.

The protein belongs to the type II topoisomerase family. As to quaternary structure, homodimer. Mg(2+) serves as cofactor. Mn(2+) is required as a cofactor. Requires Ca(2+) as cofactor. Phosphorylated at multiple sites at both extremities of the protein.

The protein localises to the nucleus. The enzyme catalyses ATP-dependent breakage, passage and rejoining of double-stranded DNA.. Its function is as follows. Control of topological states of DNA by transient breakage and subsequent rejoining of DNA strands. Topoisomerase II makes double-strand breaks. This is DNA topoisomerase 2 (top2) from Schizosaccharomyces pombe (strain 972 / ATCC 24843) (Fission yeast).